The primary structure comprises 275 residues: Bis(5'-nucleosyl)-tetraphosphatase, symmetrical (275 aa).

It belongs to the Ap4A hydrolase family.

It catalyses the reaction P(1),P(4)-bis(5'-adenosyl) tetraphosphate + H2O = 2 ADP + 2 H(+). Functionally, hydrolyzes diadenosine 5',5'''-P1,P4-tetraphosphate to yield ADP. The polypeptide is Bis(5'-nucleosyl)-tetraphosphatase, symmetrical (Haemophilus influenzae (strain PittEE)).